The primary structure comprises 236 residues: 27 kDa hemolymph protein (236 aa).

The first 17 residues, 1–17 (MMWKLIIVTILAVGVLC), serve as a signal peptide directing secretion.

In terms of assembly, monomer. In terms of tissue distribution, hemolymph.

It is found in the secreted. The protein is 27 kDa hemolymph protein of Galleria mellonella (Greater wax moth).